The chain runs to 1011 residues: Retinoblastoma-related protein (1011 aa).

Residues 1 to 22 form a disordered region; it reads MSQASVDMEDVKPSISLPSDDG. Residues 411–612 form a domain A region; that stretch reads TPVSTAMTTA…ERGSSMYNSL (202 aa). The tract at residues 411–860 is pocket; it reads TPVSTAMTTA…NEVFIPSVKP (450 aa). The spacer stretch occupies residues 613-729; that stretch reads IVARPTLAAE…PAGGGETCAE (117 aa). Residues 730 to 860 form a domain B region; it reads TGINIFFNKI…NEVFIPSVKP (131 aa). A disordered region spans residues 872 to 903; it reads QKSKSSPEDSNNADSQIPGSPRLSPFPNLPDM. A compositionally biased stretch (polar residues) spans 873 to 889; it reads KSKSSPEDSNNADSQIP.

The protein belongs to the retinoblastoma protein (RB) family.

The protein localises to the nucleus. Regulator of biological processes that recruits a histone deacetylase to control gene transcription. May play a role in the entry into mitosis, negatively regulating the cell proliferation. Formation of stable complexes with geminiviridae replication-associated proteins may create a cellular environment which favors viral DNA replication. This chain is Retinoblastoma-related protein (Rb1), found in Cocos nucifera (Coconut palm).